Here is a 101-residue protein sequence, read N- to C-terminus: NAD(P)H-quinone oxidoreductase subunit 4L, chloroplastic (101 aa).

A run of 3 helical transmembrane segments spans residues 2 to 22 (MLEH…YGLI), 32 to 52 (MCLE…SDFF), and 61 to 81 (IFSI…PAIV).

It belongs to the complex I subunit 4L family. As to quaternary structure, NDH is composed of at least 16 different subunits, 5 of which are encoded in the nucleus.

It is found in the plastid. It localises to the chloroplast thylakoid membrane. The catalysed reaction is a plastoquinone + NADH + (n+1) H(+)(in) = a plastoquinol + NAD(+) + n H(+)(out). The enzyme catalyses a plastoquinone + NADPH + (n+1) H(+)(in) = a plastoquinol + NADP(+) + n H(+)(out). Its function is as follows. NDH shuttles electrons from NAD(P)H:plastoquinone, via FMN and iron-sulfur (Fe-S) centers, to quinones in the photosynthetic chain and possibly in a chloroplast respiratory chain. The immediate electron acceptor for the enzyme in this species is believed to be plastoquinone. Couples the redox reaction to proton translocation, and thus conserves the redox energy in a proton gradient. This is NAD(P)H-quinone oxidoreductase subunit 4L, chloroplastic from Lotus japonicus (Lotus corniculatus var. japonicus).